The primary structure comprises 405 residues: Saccharopepsin (405 aa).

Positions 1 to 22 (MFSLKALLPLALLLVSANQVAA) are cleaved as a signal peptide. A propeptide spans 23–76 (KVHKAKIYKHELSDEMKEVTFEQHLAHLGQKYLTQFEKANPEVVFSREHPFFTE) (activation peptide). In terms of domain architecture, Peptidase A1 spans 91-402 (YYTDITLGTP…DLGNNAVGLA (312 aa)). The active site involves Asp109. Residues Cys122 and Cys127 are joined by a disulfide bond. N-linked (GlcNAc...) asparagine glycosylation is present at Asn144. Asp294 is a catalytic residue. Cys328 and Cys361 are disulfide-bonded. N-linked (GlcNAc...) asparagine glycosylation occurs at Asn345.

Belongs to the peptidase A1 family.

Its subcellular location is the vacuole. It carries out the reaction Hydrolysis of proteins with broad specificity for peptide bonds. Cleaves -Leu-Leu-|-Val-Tyr- bond in a synthetic substrate. Does not act on esters of Tyr or Arg.. In terms of biological role, aspartyl protease implicated in the post-translational regulation of S.cerevisiae vacuolar proteinases. Acts on YSCB, on YSCY and on itself. The protein is Saccharopepsin (PEP4) of Saccharomyces cerevisiae (strain ATCC 204508 / S288c) (Baker's yeast).